A 768-amino-acid polypeptide reads, in one-letter code: UPF0313 protein VV2143 (768 aa).

The Radical SAM core domain maps to 363 to 640 (AYDMIKTSVN…LHKALLRYHD (278 aa)). [4Fe-4S] cluster contacts are provided by cysteine 377, cysteine 381, and cysteine 384. The interval 674–768 (DARTPAQRRK…GGRNQPSRAR (95 aa)) is disordered. Residues 679 to 689 (AQRRKSGRHGA) show a composition bias toward basic residues. A compositionally biased stretch (polar residues) spans 719–731 (GGQSNSAPSRSGS).

Belongs to the UPF0313 family. [4Fe-4S] cluster serves as cofactor.

The protein is UPF0313 protein VV2143 of Vibrio vulnificus (strain YJ016).